The sequence spans 232 residues: NAD(P)H-quinone oxidoreductase subunit K 1 (232 aa).

Positions 49, 50, 114, and 145 each coordinate [4Fe-4S] cluster.

The protein belongs to the complex I 20 kDa subunit family. As to quaternary structure, NDH-1 can be composed of about 15 different subunits; different subcomplexes with different compositions have been identified which probably have different functions. Requires [4Fe-4S] cluster as cofactor.

Its subcellular location is the cellular thylakoid membrane. It catalyses the reaction a plastoquinone + NADH + (n+1) H(+)(in) = a plastoquinol + NAD(+) + n H(+)(out). It carries out the reaction a plastoquinone + NADPH + (n+1) H(+)(in) = a plastoquinol + NADP(+) + n H(+)(out). NDH-1 shuttles electrons from an unknown electron donor, via FMN and iron-sulfur (Fe-S) centers, to quinones in the respiratory and/or the photosynthetic chain. The immediate electron acceptor for the enzyme in this species is believed to be plastoquinone. Couples the redox reaction to proton translocation, and thus conserves the redox energy in a proton gradient. Cyanobacterial NDH-1 also plays a role in inorganic carbon-concentration. This Acaryochloris marina (strain MBIC 11017) protein is NAD(P)H-quinone oxidoreductase subunit K 1.